A 297-amino-acid chain; its full sequence is Acetylglutamate kinase (297 aa).

Substrate is bound by residues 68-69, Arg-90, and Asn-189; that span reads GG.

Belongs to the acetylglutamate kinase family. ArgB subfamily.

The protein localises to the cytoplasm. The enzyme catalyses N-acetyl-L-glutamate + ATP = N-acetyl-L-glutamyl 5-phosphate + ADP. Its pathway is amino-acid biosynthesis; L-arginine biosynthesis; N(2)-acetyl-L-ornithine from L-glutamate: step 2/4. Functionally, catalyzes the ATP-dependent phosphorylation of N-acetyl-L-glutamate. In Akkermansia muciniphila (strain ATCC BAA-835 / DSM 22959 / JCM 33894 / BCRC 81048 / CCUG 64013 / CIP 107961 / Muc), this protein is Acetylglutamate kinase.